The primary structure comprises 234 residues: Response regulator RppA (234 aa).

The region spanning 2–118 is the Response regulatory domain; it reads RILLVEDETD…ELLARLRALQ (117 aa). At aspartate 53 the chain carries 4-aspartylphosphate. Residues 126 to 232 constitute a DNA-binding region (ompR/PhoB-type); that stretch reads PQILTLGNFS…VPGQGYRFTL (107 aa).

Interacts with histidine kinase Hik2; may accept phosphate from Hik2.

Its function is as follows. Member of two-component regulatory system RppA/RppB, involved in the establishment of the appropriate stoichiometry between the 2 photosystems. It senses changes in the plastoquinone (PQ) redox poise. Another group shows this two-component pair, renamed NrsR/NrsS, controls the nickel-dependent expression of the nrsBACD operon; they suggest the photosystem-related activities seen earlier are due to the expression of NrsS (RppB) in the absence of its natural substrate NrsR (RppA). May accept phosphate from Hik2 in a possible Hik2/RppA two-component system. The protein is Response regulator RppA of Synechocystis sp. (strain ATCC 27184 / PCC 6803 / Kazusa).